The primary structure comprises 323 residues: Phosphatidylethanolamine:ceramide ethanolaminephosphotransferase (323 aa).

Over 1–26 the chain is Cytoplasmic; the sequence is MAVPPVEMYSGSFWNRMRKPLPLRTQ. The chain crosses the membrane as a helical span at residues 27–47; the sequence is VIRFTVVFVIVSFILAVALQI. At 48–73 the chain is on the extracellular side; it reads THERMPDPKVTKPLPDLGFEVLHKYP. The chain crosses the membrane as a helical span at residues 74–94; it reads FLFSVADCCIGFLNILSVFTA. The Cytoplasmic portion of the chain corresponds to 95 to 147; that stretch reads FKLYLLHRHCVGSGEPELPCNIPGVSRFFLSVWLCKENCRIELRNVHTIAWIR. A helical transmembrane segment spans residues 148–168; sequence FITSYALLLLSRSVIMVVTSL. Topologically, residues 169-211 are extracellular; that stretch reads PNPDDLCQDPPKIENRVKDVILTVLTAGAGSIHCGDLMYSGHT. Residue His210 is part of the active site. The helical transmembrane segment at 212–232 threads the bilayer; that stretch reads VILTLHLMFHWIYGAMVHWSF. Residue Arg233 is a topological domain, cytoplasmic. A helical membrane pass occupies residues 234 to 254; that stretch reads PVVTVVAIFGYYCIVASRFHY. Residues His253 and Asp257 contribute to the active site. The Extracellular portion of the chain corresponds to 255–257; that stretch reads TDD. Residues 258-278 traverse the membrane as a helical segment; the sequence is VLVAIYLTIATFIAVGHNADG. The Cytoplasmic segment spans residues 279–323; that stretch reads APWQLQLFIRWLPCCGANSREVTEDGVPVAIVIKNEEMMNFEGKS.

It belongs to the sphingomyelin synthase family.

It localises to the membrane. Functionally, bidirectional lipid ethanolaminephosphotransferase capable of converting phosphatidylethanolamine (PE) and ceramide to ethanolamine-phosphorylceramide (EPC) and diacylglycerol (DAG) and vice versa. Direction is dependent on the relative concentrations of DAG and ceramide as phosphoethanolamine acceptors. Does not function strictly as a SM synthase. Essential for viability of the pathogenic bloodstream stage of this human protozoan parasite and, consequently, can be considered as potential drug target. The sequence is that of Phosphatidylethanolamine:ceramide ethanolaminephosphotransferase from Trypanosoma brucei brucei (strain 927/4 GUTat10.1).